The following is a 220-amino-acid chain: Putative glutathione S-transferase C1183.02 (220 aa).

Positions 2–81 (FLGTLYSFKT…YFYEKGKHND (80 aa)) constitute a GST N-terminal domain. Positions 89–216 (NEVEEAEMLK…FPLELPLTVT (128 aa)) constitute a GST C-terminal domain.

It belongs to the GST superfamily.

The protein localises to the cytoplasm. It carries out the reaction RX + glutathione = an S-substituted glutathione + a halide anion + H(+). In terms of biological role, involved in the oxidative stress response and detoxification. In Schizosaccharomyces pombe (strain 972 / ATCC 24843) (Fission yeast), this protein is Putative glutathione S-transferase C1183.02.